The following is a 263-amino-acid chain: 3-methyl-2-oxobutanoate hydroxymethyltransferase (263 aa).

Asp-46 and Asp-85 together coordinate Mg(2+). 3-methyl-2-oxobutanoate is bound by residues 46-47 (DS), Asp-85, and Lys-115. Glu-117 is a Mg(2+) binding site. Glu-180 (proton acceptor) is an active-site residue.

Belongs to the PanB family. In terms of assembly, homodecamer; pentamer of dimers. Mg(2+) serves as cofactor.

The protein localises to the cytoplasm. The enzyme catalyses 3-methyl-2-oxobutanoate + (6R)-5,10-methylene-5,6,7,8-tetrahydrofolate + H2O = 2-dehydropantoate + (6S)-5,6,7,8-tetrahydrofolate. The protein operates within cofactor biosynthesis; (R)-pantothenate biosynthesis; (R)-pantoate from 3-methyl-2-oxobutanoate: step 1/2. Catalyzes the reversible reaction in which hydroxymethyl group from 5,10-methylenetetrahydrofolate is transferred onto alpha-ketoisovalerate to form ketopantoate. The polypeptide is 3-methyl-2-oxobutanoate hydroxymethyltransferase (Corynebacterium diphtheriae (strain ATCC 700971 / NCTC 13129 / Biotype gravis)).